We begin with the raw amino-acid sequence, 83 residues long: Small ribosomal subunit protein eS21 (83 aa).

Met-1 is subject to N-acetylmethionine. The residue at position 81 (Lys-81) is an N6-acetyllysine.

It belongs to the eukaryotic ribosomal protein eS21 family. In terms of assembly, component of the 40S small ribosomal subunit.

It localises to the cytoplasm. The protein localises to the cytosol. It is found in the rough endoplasmic reticulum. In terms of biological role, component of the small ribosomal subunit. The ribosome is a large ribonucleoprotein complex responsible for the synthesis of proteins in the cell. In Mus musculus (Mouse), this protein is Small ribosomal subunit protein eS21 (Rps21).